Here is a 213-residue protein sequence, read N- to C-terminus: UPF0111 protein TM_0914 (213 aa).

This sequence belongs to the UPF0111 family.

The sequence is that of UPF0111 protein TM_0914 from Thermotoga maritima (strain ATCC 43589 / DSM 3109 / JCM 10099 / NBRC 100826 / MSB8).